The sequence spans 204 residues: MRALPGAGTVCDTAGVTERSRENRHPTGRGPRAGSVSAASRAVRHRRLAQHALSHNISDMNRSVPTDSQVSLDAIVGISDSDLMISQPYRLYVERLDPSRNMARYYAMSIEPNLFGDICLLRKWGRIGTKGQMMVHHFGQEEDAVRLFLDLLRQKRKRGYRPRPSLPKEKWPAEAEHESATSAPVPDPEGHLDLDEERNLDGEL.

Disordered regions lie at residues 1–37 (MRALPGAGTVCDTAGVTERSRENRHPTGRGPRAGSVS) and 159–204 (GYRP…DGEL). Low complexity predominate over residues 28 to 37 (GRGPRAGSVS). Residues 88 to 175 (PYRLYVERLD…LPKEKWPAEA (88 aa)) enclose the WGR domain. Composition is skewed to basic and acidic residues over residues 166–179 (LPKEKWPAEAEHES) and 188–204 (PEGHLDLDEERNLDGEL).

This is an uncharacterized protein from Sinorhizobium fredii (strain NBRC 101917 / NGR234).